The following is a 362-amino-acid chain: Phosphoserine aminotransferase (362 aa).

Arg42 contributes to the L-glutamate binding site. Residues 76–77, Trp102, Thr152, Asp173, and Gln196 each bind pyridoxal 5'-phosphate; that span reads AS. The residue at position 197 (Lys197) is an N6-(pyridoxal phosphate)lysine. Residue 238 to 239 participates in pyridoxal 5'-phosphate binding; the sequence is NT.

The protein belongs to the class-V pyridoxal-phosphate-dependent aminotransferase family. SerC subfamily. In terms of assembly, homodimer. The cofactor is pyridoxal 5'-phosphate.

The protein resides in the cytoplasm. It carries out the reaction O-phospho-L-serine + 2-oxoglutarate = 3-phosphooxypyruvate + L-glutamate. It catalyses the reaction 4-(phosphooxy)-L-threonine + 2-oxoglutarate = (R)-3-hydroxy-2-oxo-4-phosphooxybutanoate + L-glutamate. Its pathway is amino-acid biosynthesis; L-serine biosynthesis; L-serine from 3-phospho-D-glycerate: step 2/3. The protein operates within cofactor biosynthesis; pyridoxine 5'-phosphate biosynthesis; pyridoxine 5'-phosphate from D-erythrose 4-phosphate: step 3/5. In terms of biological role, catalyzes the reversible conversion of 3-phosphohydroxypyruvate to phosphoserine and of 3-hydroxy-2-oxo-4-phosphonooxybutanoate to phosphohydroxythreonine. The protein is Phosphoserine aminotransferase of Chromobacterium violaceum (strain ATCC 12472 / DSM 30191 / JCM 1249 / CCUG 213 / NBRC 12614 / NCIMB 9131 / NCTC 9757 / MK).